The primary structure comprises 414 residues: Isocitrate dehydrogenase [NADP] cytoplasmic (414 aa).

Position 2 is an N-acetylserine (Ser-2). At Tyr-42 the chain carries Phosphotyrosine. 75-77 (TIT) serves as a coordination point for NADP(+). Substrate is bound at residue Thr-77. Lys-81 carries the N6-acetyllysine modification. Residue Arg-82 participates in NADP(+) binding. Substrate contacts are provided by residues 94–100 (SPNGTIR) and Arg-109. The residue at position 126 (Lys-126) is an N6-succinyllysine. The substrate site is built by Arg-132 and Lys-212. N6-acetyllysine is present on residues Lys-224, Lys-233, and Lys-243. A Mn(2+)-binding site is contributed by Asp-252. Position 260 (Lys-260) interacts with NADP(+). Residues Asp-275 and Asp-279 each contribute to the Mn(2+) site. 310–315 (GTVTRH) contacts NADP(+). At Lys-321 the chain carries N6-acetyllysine. Position 328 (Asn-328) interacts with NADP(+). The residue at position 389 (Ser-389) is a Phosphoserine. N6-succinyllysine is present on Lys-400.

Belongs to the isocitrate and isopropylmalate dehydrogenases family. Homodimer. Requires Mg(2+) as cofactor. It depends on Mn(2+) as a cofactor. In terms of processing, the N-terminus is blocked. Acetylation at Lys-374 dramatically reduces catalytic activity. Ubiquitous.

The protein resides in the cytoplasm. It localises to the cytosol. Its subcellular location is the peroxisome. It catalyses the reaction D-threo-isocitrate + NADP(+) = 2-oxoglutarate + CO2 + NADPH. Its function is as follows. Catalyzes the NADP(+)-dependent oxidative decarboxylation of isocitrate (D-threo-isocitrate) to 2-ketoglutarate (2-oxoglutarate), which is required by other enzymes such as the phytanoyl-CoA dioxygenase. Plays a critical role in the generation of NADPH, an important cofactor in many biosynthesis pathways. May act as a corneal epithelial crystallin and may be involved in maintaining corneal epithelial transparency. In Rattus norvegicus (Rat), this protein is Isocitrate dehydrogenase [NADP] cytoplasmic (Idh1).